The chain runs to 175 residues: Protein MODIFYING WALL LIGNIN-1 (175 aa).

Residues 1-24 (MFIFLFGLAAFFLCLSAEFQKAKA) form the signal peptide. Over 25–52 (LLRAQVFLKGKDLKWDGESCYLPENRAF) the chain is Cytoplasmic. Residues 53–73 (GLGIAALVCVSVAQIVGNVVI) form a helical membrane-spanning segment. Residues 74 to 86 (CRGFTKTDKTRTT) lie on the Extracellular side of the membrane. A helical membrane pass occupies residues 87 to 107 (IFCIILLLFSWVNFAVAVTLI). The Cytoplasmic segment spans residues 108–135 (SVGASMNREQIYGKGWLNRECYLVKDGV). The helical transmembrane segment at 136–156 (FAASGFLSVTTMAAILGAFAF) threads the bilayer. Topologically, residues 157 to 175 (KVKPSLQVENHDKRHTQNV) are extracellular.

The protein belongs to the DESIGUAL family. As to quaternary structure, interacts with CRK19.

It is found in the cell membrane. Its function is as follows. Together with MWL2, contributes to secondary cell wall biology, specifically lignin biosynthesis. In Arabidopsis thaliana (Mouse-ear cress), this protein is Protein MODIFYING WALL LIGNIN-1.